A 427-amino-acid polypeptide reads, in one-letter code: MEMERVHEFPHTHMDRRPRKRARLGWDVLPQATKAQVGMFCGQEIGNISSFASSGAPSDNSSSLCVKGVARNGSPPWREDDKDGHYIFELGDDLTPRYKIYSKMGEGTFGQVLECWDRERKEMVAVKIVRGVKKYREAAMIEIEMLQQLGKHDKGGNRCVQIRNWFDYRNHICIVFEKLGSSLYDFLRKNNYRSFPIDLVREIGWQLLECVAFMHDLRMIHTDLKPENILLVSSDYVKIPEYKGSRLQRDVCYKRVPKSSAIKVIDFGSTTYERQDQTYIVSTRHYRAPEVILGLGWSYPCDVWSVGCIIVELCTGEALFQTHENLEHLAMMERVLGPFPQQMLKKVDRHSEKYVRRGRLDWPDGATSRDSLKAVLKLPRLQNLIMQHVDHSAGELINMVQGLLRFDPSERITAREALRHPFFARRR.

The Protein kinase domain maps to 98–423 (YKIYSKMGEG…AREALRHPFF (326 aa)). ATP contacts are provided by residues 104–112 (MGEGTFGQV) and Lys-127. Catalysis depends on Asp-223, which acts as the Proton acceptor.

Belongs to the protein kinase superfamily. CMGC Ser/Thr protein kinase family. Lammer subfamily.

It carries out the reaction L-seryl-[protein] + ATP = O-phospho-L-seryl-[protein] + ADP + H(+). It catalyses the reaction L-threonyl-[protein] + ATP = O-phospho-L-threonyl-[protein] + ADP + H(+). The enzyme catalyses L-tyrosyl-[protein] + ATP = O-phospho-L-tyrosyl-[protein] + ADP + H(+). The sequence is that of Serine/threonine-protein kinase AFC2 (AFC2) from Arabidopsis thaliana (Mouse-ear cress).